Reading from the N-terminus, the 325-residue chain is tRNA U34 carboxymethyltransferase (325 aa).

Residues K91, W105, K110, G130, 152-154 (DPS), M196, Y200, and R315 contribute to the carboxy-S-adenosyl-L-methionine site.

It belongs to the class I-like SAM-binding methyltransferase superfamily. CmoB family. In terms of assembly, homotetramer.

It catalyses the reaction carboxy-S-adenosyl-L-methionine + 5-hydroxyuridine(34) in tRNA = 5-carboxymethoxyuridine(34) in tRNA + S-adenosyl-L-homocysteine + H(+). Catalyzes carboxymethyl transfer from carboxy-S-adenosyl-L-methionine (Cx-SAM) to 5-hydroxyuridine (ho5U) to form 5-carboxymethoxyuridine (cmo5U) at position 34 in tRNAs. This chain is tRNA U34 carboxymethyltransferase, found in Aeromonas salmonicida (strain A449).